We begin with the raw amino-acid sequence, 534 residues long: NEDD8-activating enzyme E1 regulatory subunit (534 aa).

Position 2 is an N-acetylalanine (A2). An N6-acetyllysine mark is found at K6 and K341. Residues 331–344 are interaction with UBA3; it reads DMIADSNKYIKLQN.

It belongs to the ubiquitin-activating E1 family. ULA1 subfamily. In terms of assembly, heterodimer of UBA3 and NAE1. The complex binds NEDD8 and UBE2M. Binds APP and TP53BP2. Ubiquitinated by TRIP12, leading to its degradation by the proteasome. As to expression, expressed throughout the brain. In hippocampus, strongly expressed in granule cells and in the pyramidal cell layer. Strongly expressed in the piriform cortex. In the cerebellum, expressed only in Purkinje cells.

It is found in the cell membrane. It participates in protein modification; protein neddylation. With respect to regulation, binding of TP53BP2 to the regulatory subunit NAE1 decreases neddylation activity. Regulatory subunit of the dimeric UBA3-NAE1 E1 enzyme. E1 activates NEDD8 by first adenylating its C-terminal glycine residue with ATP, thereafter linking this residue to the side chain of the catalytic cysteine, yielding a NEDD8-UBA3 thioester and free AMP. E1 finally transfers NEDD8 to the catalytic cysteine of UBE2M. Necessary for cell cycle progression through the S-M checkpoint. Overexpression of NAE1 causes apoptosis through deregulation of NEDD8 conjugation. The covalent attachment of NEDD8 to target proteins is known as 'neddylation' and the process is involved in the regulation of cell growth, viability and development. The polypeptide is NEDD8-activating enzyme E1 regulatory subunit (Nae1) (Rattus norvegicus (Rat)).